Consider the following 416-residue polypeptide: Putative F-box/kelch-repeat protein At1g12870 (416 aa).

Positions 27–76 constitute an F-box domain; sequence MIASSSLPDDVVEEIFLKLPVKALMRFKSLSKQWRSTLESCYFSQRHLKI. Kelch repeat units follow at residues 199-243 and 297-341; these read LVWL…PASA and CMYE…HVLD.

This chain is Putative F-box/kelch-repeat protein At1g12870, found in Arabidopsis thaliana (Mouse-ear cress).